We begin with the raw amino-acid sequence, 129 residues long: Small ribosomal subunit protein uS11 (129 aa).

This sequence belongs to the universal ribosomal protein uS11 family. Part of the 30S ribosomal subunit. Interacts with proteins S7 and S18. Binds to IF-3.

Located on the platform of the 30S subunit, it bridges several disparate RNA helices of the 16S rRNA. Forms part of the Shine-Dalgarno cleft in the 70S ribosome. This Bacillus cereus (strain ATCC 14579 / DSM 31 / CCUG 7414 / JCM 2152 / NBRC 15305 / NCIMB 9373 / NCTC 2599 / NRRL B-3711) protein is Small ribosomal subunit protein uS11.